Here is a 136-residue protein sequence, read N- to C-terminus: uncharacterized protein (136 aa).

This sequence to E.coli YcgX and YdfO.

This is an uncharacterized protein from Escherichia coli (strain K12).